Reading from the N-terminus, the 446-residue chain is Bifunctional protein GlmU (446 aa).

Positions 1 to 225 (MEGIILAAGK…ETEVYGVNDR (225 aa)) are pyrophosphorylase. UDP-N-acetyl-alpha-D-glucosamine is bound by residues 6-9 (LAAG), Lys-20, Gln-70, and 75-76 (GT). A Mg(2+)-binding site is contributed by Asp-98. UDP-N-acetyl-alpha-D-glucosamine-binding residues include Gly-135, Glu-150, Asn-165, and Asn-223. Position 223 (Asn-223) interacts with Mg(2+). Positions 226 to 246 (VQLARLTKGVYRRKAEALMQE) are linker. The N-acetyltransferase stretch occupies residues 247-446 (GVTIIDPETV…RQVNKEDYVK (200 aa)). 2 residues coordinate UDP-N-acetyl-alpha-D-glucosamine: Arg-328 and Lys-346. His-358 acts as the Proton acceptor in catalysis. The UDP-N-acetyl-alpha-D-glucosamine site is built by Tyr-361 and Asn-372. Acetyl-CoA is bound by residues Ala-375, 381 to 382 (NY), Ser-400, Ala-418, and Arg-435.

The protein in the N-terminal section; belongs to the N-acetylglucosamine-1-phosphate uridyltransferase family. This sequence in the C-terminal section; belongs to the transferase hexapeptide repeat family. As to quaternary structure, homotrimer. The cofactor is Mg(2+).

It is found in the cytoplasm. The enzyme catalyses alpha-D-glucosamine 1-phosphate + acetyl-CoA = N-acetyl-alpha-D-glucosamine 1-phosphate + CoA + H(+). It catalyses the reaction N-acetyl-alpha-D-glucosamine 1-phosphate + UTP + H(+) = UDP-N-acetyl-alpha-D-glucosamine + diphosphate. It functions in the pathway nucleotide-sugar biosynthesis; UDP-N-acetyl-alpha-D-glucosamine biosynthesis; N-acetyl-alpha-D-glucosamine 1-phosphate from alpha-D-glucosamine 6-phosphate (route II): step 2/2. It participates in nucleotide-sugar biosynthesis; UDP-N-acetyl-alpha-D-glucosamine biosynthesis; UDP-N-acetyl-alpha-D-glucosamine from N-acetyl-alpha-D-glucosamine 1-phosphate: step 1/1. Its pathway is bacterial outer membrane biogenesis; LPS lipid A biosynthesis. Catalyzes the last two sequential reactions in the de novo biosynthetic pathway for UDP-N-acetylglucosamine (UDP-GlcNAc). The C-terminal domain catalyzes the transfer of acetyl group from acetyl coenzyme A to glucosamine-1-phosphate (GlcN-1-P) to produce N-acetylglucosamine-1-phosphate (GlcNAc-1-P), which is converted into UDP-GlcNAc by the transfer of uridine 5-monophosphate (from uridine 5-triphosphate), a reaction catalyzed by the N-terminal domain. The chain is Bifunctional protein GlmU from Carboxydothermus hydrogenoformans (strain ATCC BAA-161 / DSM 6008 / Z-2901).